The chain runs to 228 residues: Max-interacting protein 1 (228 aa).

Disordered stretches follow at residues 29 to 76 (GYAS…NELE) and 161 to 228 (IGST…SFTS). The segment covering 43 to 56 (QHSKPPRRLSRAQK) has biased composition (basic residues). A compositionally biased stretch (polar residues) spans 57 to 70 (HSSGSSNTSTANRS). Residues 67-119 (ANRSTHNELEKNRRAHLRLCLERLKVLIPLGPDCTRHTTLGLLNKAKAHIKKL) enclose the bHLH domain. The segment covering 173–183 (EREEIEVDVES) has biased composition (acidic residues). Residues 216 to 228 (GYSSASVKLSFTS) are compositionally biased toward polar residues.

Interacts with SMC3. Efficient DNA binding requires dimerization with another bHLH protein. Binds DNA as a heterodimer with MAX. Interacts with RNF17. In terms of tissue distribution, high levels found in the brain, heart and lung while lower levels are seen in the liver, kidney and skeletal muscle.

It is found in the nucleus. Its function is as follows. Transcriptional repressor. MXI1 binds with MAX to form a sequence-specific DNA-binding protein complex which recognizes the core sequence 5'-CAC[GA]TG-3'. MXI1 thus antagonizes MYC transcriptional activity by competing for MAX. This chain is Max-interacting protein 1 (MXI1), found in Homo sapiens (Human).